Consider the following 329-residue polypeptide: MTATKQHKKVILVGDGAVGSSYAFALVNQGIAQELGIIEIPQLFNKAVGDAEDLSHALAFTSPKKIYAAKYEDCADADLVVITAGAPQKPGETRLDLVGKNLAINKSIVTEVVKSGFKGIFLVAANPVDVLTYSTWKFSGFPKERVIGSGTSLDSARFRQALAEKLDVDARSVHAYIMGEHGDSEFAVWSHANVAGVNLESYLKDVQNVEEAELVELFEGVRDAAYSIINKKGATFYGIAVALARITKAILNDENAVLPLSVFQEGQYANVTDCYIGQPAIVGAHGIVRPVNIPLNDAEQQKMEASAKELKAIIDEAFSKEEFASACKN.

Residues Val-18, Glu-39, Lys-46, Tyr-71, and 85-86 (GA) each bind NAD(+). Substrate contacts are provided by Gln-88 and Arg-94. Residues Ser-107, 124-126 (AAN), and Ser-149 each bind NAD(+). 126-129 (NPVD) is a binding site for substrate. Substrate is bound at residue 154-157 (DSAR). Residues Arg-159 and His-174 each coordinate beta-D-fructose 1,6-bisphosphate. The Proton acceptor role is filled by His-181. Tyr-226 carries the phosphotyrosine modification. Position 235 (Thr-235) interacts with substrate.

It belongs to the LDH/MDH superfamily. LDH family. In terms of assembly, homotetramer.

The protein localises to the cytoplasm. The catalysed reaction is (S)-lactate + NAD(+) = pyruvate + NADH + H(+). It functions in the pathway fermentation; pyruvate fermentation to lactate; (S)-lactate from pyruvate: step 1/1. Its activity is regulated as follows. Allosterically activated by fructose 1,6-bisphosphate (FBP). Catalyzes the conversion of lactate to pyruvate. The protein is L-lactate dehydrogenase of Streptococcus equinus (Streptococcus bovis).